The following is a 96-amino-acid chain: NADH-ubiquinone oxidoreductase chain 4L (96 aa).

The next 3 membrane-spanning stretches (helical) occupy residues 1–21 (MELMKMTLYTTFMITIIALSL), 27–47 (MLALMCVETMMLIVFTMLVMF), and 61–81 (IILLTISVCGAAVGLSLVVAI).

Belongs to the complex I subunit 4L family.

It localises to the mitochondrion membrane. The enzyme catalyses a ubiquinone + NADH + 5 H(+)(in) = a ubiquinol + NAD(+) + 4 H(+)(out). Core subunit of the mitochondrial membrane respiratory chain NADH dehydrogenase (Complex I) which catalyzes electron transfer from NADH through the respiratory chain, using ubiquinone as an electron acceptor. Part of the enzyme membrane arm which is embedded in the lipid bilayer and involved in proton translocation. This chain is NADH-ubiquinone oxidoreductase chain 4L (MT-ND4L), found in Lycodon semicarinatus (Ryukyu odd-tooth snake).